A 160-amino-acid chain; its full sequence is Cytochrome b6-f complex subunit 4 (160 aa).

3 helical membrane-spanning segments follow: residues 36–56 (LLYIFPVVILGTIACVVGLAV), 95–115 (LLGIALQTLIPLGLMILPFIE), and 131–151 (SVFLFGTFLTIYLGIGACLPI).

This sequence belongs to the cytochrome b family. PetD subfamily. As to quaternary structure, the 4 large subunits of the cytochrome b6-f complex are cytochrome b6, subunit IV (17 kDa polypeptide, PetD), cytochrome f and the Rieske protein, while the 4 small subunits are PetG, PetL, PetM and PetN. The complex functions as a dimer.

The protein localises to the cellular thylakoid membrane. Functionally, component of the cytochrome b6-f complex, which mediates electron transfer between photosystem II (PSII) and photosystem I (PSI), cyclic electron flow around PSI, and state transitions. This chain is Cytochrome b6-f complex subunit 4, found in Prochlorococcus marinus subsp. pastoris (strain CCMP1986 / NIES-2087 / MED4).